The primary structure comprises 510 residues: MASIDDDDDERTPLLQDSHIGELVETQKQLKSRWWSIRVMYLTMFLSSVGFSIVMTSIWPYLQKVDQSADASFLGWVIASFSLGQMVASPLFGLWSNHRPRREPLVVSITILVAASCLYAYVHVPASHNKYYMLLARTFVGFGSGNVAVVRSYVAGATSLSERTGAMANISAFQAMGFILGPAFQAALSVIGETGITINGISLQVNMYTAPALMGALLGIGNIILIFAIFREHRVDDLEKNVSSINSESEVTDVEKANEGPIDQIAVISSNILFFVVLFVFAIFETISTPLTMDMYAWTRTQAVFYNGIILAAVGVESVIVFLTVKILCKKTGERVLLLGGLAVIWIGFFILLPWGNQMPKIQWTDLQNATIHNTTQWTSSIPSSGNHSVEPTGCPVIQTWCLYTPVIHLAQYLTSDILIGVGYPICNVMSYTLYSKIIGPKPQGLYMGWLTAAGSAARTLGPVFVSQIYTHLGTRWTFGIICAFVALSLLHLTAVYKRLIPFSTRYERL.

Residues 1–38 (MASIDDDDDERTPLLQDSHIGELVETQKQLKSRWWSIR) lie on the Cytoplasmic side of the membrane. The short motif at 14-15 (LL) is the Dileucine internalization motif element. Residues 39–59 (VMYLTMFLSSVGFSIVMTSIW) form a helical membrane-spanning segment. At 60–72 (PYLQKVDQSADAS) the chain is on the extracellular side. A helical membrane pass occupies residues 73–93 (FLGWVIASFSLGQMVASPLFG). At 94-103 (LWSNHRPRRE) the chain is on the cytoplasmic side. A helical membrane pass occupies residues 104–124 (PLVVSITILVAASCLYAYVHV). Residues 125 to 132 (PASHNKYY) are Extracellular-facing. Residues 133 to 155 (MLLARTFVGFGSGNVAVVRSYVA) traverse the membrane as a helical segment. Residues 156 to 171 (GATSLSERTGAMANIS) are Cytoplasmic-facing. Residues 172–192 (AFQAMGFILGPAFQAALSVIG) form a helical membrane-spanning segment. The Extracellular portion of the chain corresponds to 193-209 (ETGITINGISLQVNMYT). A helical transmembrane segment spans residues 210 to 230 (APALMGALLGIGNIILIFAIF). Topologically, residues 231-264 (REHRVDDLEKNVSSINSESEVTDVEKANEGPIDQ) are cytoplasmic. The helical transmembrane segment at 265 to 285 (IAVISSNILFFVVLFVFAIFE) threads the bilayer. At 286–302 (TISTPLTMDMYAWTRTQ) the chain is on the extracellular side. A helical membrane pass occupies residues 303-323 (AVFYNGIILAAVGVESVIVFL). Residues 324-335 (TVKILCKKTGER) lie on the Cytoplasmic side of the membrane. A helical membrane pass occupies residues 336-356 (VLLLGGLAVIWIGFFILLPWG). At 357–406 (NQMPKIQWTDLQNATIHNTTQWTSSIPSSGNHSVEPTGCPVIQTWCLYTP) the chain is on the extracellular side. N-linked (GlcNAc...) asparagine glycosylation is found at N369 and N374. Residues 407–427 (VIHLAQYLTSDILIGVGYPIC) traverse the membrane as a helical segment. The Cytoplasmic segment spans residues 428-445 (NVMSYTLYSKIIGPKPQG). A helical membrane pass occupies residues 446-466 (LYMGWLTAAGSAARTLGPVFV). The Extracellular segment spans residues 467 to 476 (SQIYTHLGTR). The helical transmembrane segment at 477 to 497 (WTFGIICAFVALSLLHLTAVY) threads the bilayer. Over 498–510 (KRLIPFSTRYERL) the chain is Cytoplasmic.

The protein belongs to the major facilitator superfamily.

It is found in the lysosome membrane. In terms of biological role, may be a carrier that transport small solutes by using chemiosmotic ion gradients. The polypeptide is Major facilitator superfamily domain-containing protein 8 (mfsd8) (Xenopus laevis (African clawed frog)).